We begin with the raw amino-acid sequence, 190 residues long: Putative resolvase R80 (190 aa).

Positions 11 to 30 (SSVLGVHQRTLYQWDKKGWI) form a DNA-binding region, H-T-H motif. Residues 61–190 (LSICYVRVSS…RNGSRKYSNK (130 aa)) form the Resolvase/invertase-type recombinase catalytic domain. Residues 67 to 92 (RVSSNSQKDDLERQIKFMKKKYPNHT) are a coiled coil. Serine 69 acts as the O-(5'-phospho-DNA)-serine intermediate in catalysis.

It belongs to the site-specific recombinase resolvase family.

Its function is as follows. Resolvase catalyzes the resolution (a site-specific recombination) of the cointegrated replicon to yield the final transposition products. In Acanthamoeba polyphaga mimivirus (APMV), this protein is Putative resolvase R80.